Consider the following 422-residue polypeptide: Probable protein phosphatase 2C 43 (422 aa).

Residues S117–F393 form the PPM-type phosphatase domain. Mn(2+) is bound by residues D163, G164, D341, and D384.

The protein belongs to the PP2C family. Requires Mg(2+) as cofactor. Mn(2+) serves as cofactor.

The catalysed reaction is O-phospho-L-seryl-[protein] + H2O = L-seryl-[protein] + phosphate. It catalyses the reaction O-phospho-L-threonyl-[protein] + H2O = L-threonyl-[protein] + phosphate. The protein is Probable protein phosphatase 2C 43 of Arabidopsis thaliana (Mouse-ear cress).